We begin with the raw amino-acid sequence, 422 residues long: UDP-N-acetylglucosamine 1-carboxyvinyltransferase (422 aa).

Phosphoenolpyruvate is bound at residue 22-23 (KN). Residue Arg94 coordinates UDP-N-acetyl-alpha-D-glucosamine. The Proton donor role is filled by Cys118. Position 118 is a 2-(S-cysteinyl)pyruvic acid O-phosphothioketal (Cys118). Residues 123–127 (RPVDL), Asp309, and Ile331 each bind UDP-N-acetyl-alpha-D-glucosamine.

The protein belongs to the EPSP synthase family. MurA subfamily.

The protein localises to the cytoplasm. The catalysed reaction is phosphoenolpyruvate + UDP-N-acetyl-alpha-D-glucosamine = UDP-N-acetyl-3-O-(1-carboxyvinyl)-alpha-D-glucosamine + phosphate. It functions in the pathway cell wall biogenesis; peptidoglycan biosynthesis. Its function is as follows. Cell wall formation. Adds enolpyruvyl to UDP-N-acetylglucosamine. The chain is UDP-N-acetylglucosamine 1-carboxyvinyltransferase from Cereibacter sphaeroides (strain KD131 / KCTC 12085) (Rhodobacter sphaeroides).